Reading from the N-terminus, the 523-residue chain is 2-isopropylmalate synthase (523 aa).

The Pyruvate carboxyltransferase domain maps to 5-267; that stretch reads VIIFDTTLRD…HTNINHHEIW (263 aa). 4 residues coordinate Mn(2+): aspartate 14, histidine 202, histidine 204, and asparagine 238. The regulatory domain stretch occupies residues 392–523; sequence RLDYFSVQSG…QNKENNKETV (132 aa).

It belongs to the alpha-IPM synthase/homocitrate synthase family. LeuA type 1 subfamily. Homodimer. Mn(2+) is required as a cofactor.

It is found in the cytoplasm. It catalyses the reaction 3-methyl-2-oxobutanoate + acetyl-CoA + H2O = (2S)-2-isopropylmalate + CoA + H(+). The protein operates within amino-acid biosynthesis; L-leucine biosynthesis; L-leucine from 3-methyl-2-oxobutanoate: step 1/4. In terms of biological role, catalyzes the condensation of the acetyl group of acetyl-CoA with 3-methyl-2-oxobutanoate (2-ketoisovalerate) to form 3-carboxy-3-hydroxy-4-methylpentanoate (2-isopropylmalate). In Salmonella choleraesuis (strain SC-B67), this protein is 2-isopropylmalate synthase.